The following is a 1762-amino-acid chain: ADAMTS-like protein 1 (1762 aa).

An N-terminal signal peptide occupies residues 1 to 28 (MECCRRATPGTLLLFLAFLLLSSRTARS). One can recognise a TSP type-1 1 domain in the interval 33–82 (DGLWDAWGPWSECSRTCGGGASYSLRRCLSSKSCEGRNIRYRTCSNVDCP). Trp-39 and Trp-42 each carry a C-linked (Man) tryptophan glycan. Cystine bridges form between Cys-45-Cys-76, Cys-49-Cys-81, and Cys-60-Cys-66. The O-linked (Fuc...) threonine glycan is linked to Thr-48. Residue Asn-251 is glycosylated (N-linked (GlcNAc...) asparagine). Thr-312 is a glycosylation site (O-linked (Fuc...) threonine). TSP type-1 domains follow at residues 376 to 424 (PLPR…MYTP), 436 to 493 (DCPK…TPCY), 522 to 584 (EEPS…GPCS), 607 to 665 (ELYD…NLDP), 666 to 729 (CPAR…FNCP), and 788 to 850 (CPSE…ATCA). A glycan (O-linked (Fuc...) serine) is linked at Ser-391. A glycan (O-linked (Fuc...) threonine) is linked at Thr-451. 3 disulfide bridges follow: Cys-534/Cys-578, Cys-538/Cys-583, and Cys-549/Cys-567. Cystine bridges form between Cys-678-Cys-723, Cys-682-Cys-728, Cys-693-Cys-712, Cys-800-Cys-844, Cys-804-Cys-849, Cys-815-Cys-832, and Cys-899-Cys-947. Residues 861-963 (PHIAAARKVY…EHFVIKLIGG (103 aa)) enclose the Ig-like C2-type 1 domain. Residues 1120–1164 (LKPSERRTSPVTLSPHKHVSGFSSSLRTSSTGDAGGGSRRPHRKP) are disordered. A compositionally biased stretch (low complexity) spans 1139 to 1151 (SGFSSSLRTSSTG). Ig-like C2-type domains follow at residues 1164–1266 (PTIL…IAVT), 1286–1369 (PAVT…TQLL), and 1395–1485 (PSVL…ASLV). Cystine bridges form between Cys-1202–Cys-1250, Cys-1308–Cys-1353, and Cys-1418–Cys-1469. TSP type-1 domains lie at 1545–1608 (CPSR…QLCV) and 1666–1726 (CSVH…TPCE). Residues 1726–1762 (ENMECRDTTRYCEKVKQLKLCQLSQFKSRCCGTCGKA) enclose the PLAC domain.

In terms of assembly, monomer. C-, N- and O-glycosylated. O-fucosylated by POFUT2 on a serine or a threonine residue found within the consensus sequence C1-X(2)-(S/T)-C2-G of the TSP type-1 repeat domains where C1 and C2 are the first and second cysteine residue of the repeat, respectively. Fucosylated repeats can then be further glycosylated by the addition of a beta-1,3-glucose residue by the glucosyltransferase, B3GALTL. Fucosylation mediates the efficient secretion of ADAMTSL1. Can also be C-glycosylated with one or two mannose molecules on tryptophan residues within the consensus sequence W-X-X-W of the TPRs, and N-glycosylated. These other glycosylations can also facilitate secretion. In terms of processing, disulfide bonds are present. Expressed primarily in adult skeletal muscle.

Its subcellular location is the secreted. It is found in the extracellular space. The protein localises to the extracellular matrix. This Homo sapiens (Human) protein is ADAMTS-like protein 1 (ADAMTSL1).